We begin with the raw amino-acid sequence, 160 residues long: Cytosolic iron-sulfur assembly component 2A (160 aa).

His-89, His-123, Glu-150, and Glu-153 together coordinate Zn(2+).

This sequence belongs to the MIP18 family. As to quaternary structure, monomer and homodimer. Component of the CIA complex. Interacts with CIAO1. Interacts with IREB2. Interacts with APAF1. In terms of tissue distribution, substantially enriched in macrophages.

It is found in the cytoplasm. In terms of biological role, component of the cytosolic iron-sulfur protein assembly (CIA) complex, a multiprotein complex that mediates the incorporation of iron-sulfur cluster into extramitochondrial Fe/S proteins. As a CIA complex component and in collaboration with CIAO1 specifically matures ACO1 and stabilizes IREB2, connecting cytosolic iron-sulfur protein maturation with cellular iron regulation. May play a role in chromosome segregation through establishment of sister chromatid cohesion. May induce apoptosis in collaboration with APAF1. This Homo sapiens (Human) protein is Cytosolic iron-sulfur assembly component 2A.